A 155-amino-acid chain; its full sequence is Small ribosomal subunit protein uS7c (155 aa).

The protein belongs to the universal ribosomal protein uS7 family. Part of the 30S ribosomal subunit.

The protein resides in the plastid. It is found in the chloroplast. Its function is as follows. One of the primary rRNA binding proteins, it binds directly to 16S rRNA where it nucleates assembly of the head domain of the 30S subunit. This Lilium superbum (Turk's cap lily) protein is Small ribosomal subunit protein uS7c (rps7).